The following is a 181-amino-acid chain: Adenine phosphoribosyltransferase (181 aa).

The protein belongs to the purine/pyrimidine phosphoribosyltransferase family. As to quaternary structure, homodimer.

Its subcellular location is the cytoplasm. It catalyses the reaction AMP + diphosphate = 5-phospho-alpha-D-ribose 1-diphosphate + adenine. It participates in purine metabolism; AMP biosynthesis via salvage pathway; AMP from adenine: step 1/1. Catalyzes a salvage reaction resulting in the formation of AMP, that is energically less costly than de novo synthesis. The chain is Adenine phosphoribosyltransferase from Acidobacterium capsulatum (strain ATCC 51196 / DSM 11244 / BCRC 80197 / JCM 7670 / NBRC 15755 / NCIMB 13165 / 161).